We begin with the raw amino-acid sequence, 448 residues long: Phosphoglucosamine mutase (448 aa).

Residue Ser-100 is the Phosphoserine intermediate of the active site. Positions 100, 240, 242, and 244 each coordinate Mg(2+). Phosphoserine is present on Ser-100.

Belongs to the phosphohexose mutase family. Mg(2+) is required as a cofactor. Post-translationally, activated by phosphorylation.

It carries out the reaction alpha-D-glucosamine 1-phosphate = D-glucosamine 6-phosphate. Functionally, catalyzes the conversion of glucosamine-6-phosphate to glucosamine-1-phosphate. This is Phosphoglucosamine mutase from Alkaliphilus metalliredigens (strain QYMF).